The chain runs to 738 residues: Adhesion G protein-coupled receptor L4 (738 aa).

The signal sequence occupies residues 1-19 (MRLLLLLVGLSTLLNHSYT). One can recognise an EGF-like 1 domain in the interval 20 to 56 (QNCKTPCLPNAKCEVLDEVAACFCSTGYTGNGITICE). The Extracellular portion of the chain corresponds to 20 to 480 (QNCKTPCLPN…DYNILTRITQ (461 aa)). 9 cysteine pairs are disulfide-bonded: Cys22-Cys32, Cys26-Cys41, Cys43-Cys55, Cys61-Cys73, Cys67-Cys82, Cys84-Cys105, Cys111-Cys123, Cys117-Cys132, and Cys134-Cys155. Residues 57–106 (DVDECNETSVCGDHAVCENTNGGFSCFCVEGYQTSTGKTQFTPNDGSYCQ) form the EGF-like 2; calcium-binding domain. Asn62 carries an N-linked (GlcNAc...) asparagine glycan. The region spanning 107–156 (DVDECNETSVCGDHAVCENTNGGFSCFCVEGYQTSTGKTQFTPNDGSYCQ) is the EGF-like 3; calcium-binding domain. An N-linked (GlcNAc...) asparagine glycan is attached at Asn112. Residues Asn175, Asn226, Asn297, Asn421, Asn429, and Asn443 are each glycosylated (N-linked (GlcNAc...) asparagine). The GAIN-B domain occupies 292 to 467 (TQFDMNSTDL…AILMSPSTSI (176 aa)). 2 disulfides stabilise this stretch: Cys417–Cys449 and Cys437–Cys451. The tract at residues 417–467 (CAFWNYSVDDMNNGSWSSEGCELTYSNDTHTSCRCSHLTHFAILMSPSTSI) is GPS. Residues 481 to 501 (LGIIISLICLAICIFTFWFFS) traverse the membrane as a helical segment. At 502–522 (EIQSTRTTIHKNLCCSLFLAQ) the chain is on the cytoplasmic side. The helical transmembrane segment at 523 to 543 (LVFLVGININTNKLVCSIIAG) threads the bilayer. Residues 544–547 (LLHY) are Extracellular-facing. A helical transmembrane segment spans residues 548-568 (FFLAAFAWMCIEGIYLYLIVV). The Cytoplasmic segment spans residues 569–580 (GLIYNKGFLHKN). The chain crosses the membrane as a helical span at residues 581 to 601 (FYIFGYLSPAVVVGFSASLGY). The Extracellular portion of the chain corresponds to 602–621 (RYYGTTKVCWLSTENNFIWS). A helical membrane pass occupies residues 622 to 642 (FIGPACLIILVNLLAFGVIIY). At 643 to 666 (KVFRHTAGLKPEVSCYENIRSCAR) the chain is on the cytoplasmic side. Residues 667-687 (GALALLFLLGTTWTFGVLHVV) form a helical membrane-spanning segment. Residues 688–694 (HASVVTA) lie on the Extracellular side of the membrane. The chain crosses the membrane as a helical span at residues 695 to 715 (YLFTVSNAFQGMFIFLFLCVL). At 716 to 738 (SRKIQEEYYRLFKNVPCCFECLR) the chain is on the cytoplasmic side.

This sequence belongs to the G-protein coupled receptor 2 family. Adhesion G-protein coupled receptor (ADGR) subfamily. Heterodimer of 2 chains generated by proteolytic processing; the large extracellular N-terminal fragment and the membrane-bound C-terminal fragment predominantly remain associated and non-covalently linked. Proteolytically cleaved into 2 subunits, an extracellular alpha subunit and a seven-transmembrane subunit. In terms of processing, glycosylated. In terms of tissue distribution, abundantly expressed in heart, lung, and kidney. Less evident expression is observed in brain, skeletal muscle, liver and spleen. No expression is detected in testis.

The protein localises to the cell membrane. Endothelial orphan receptor that acts as a key regulator of angiogenesis. The polypeptide is Adhesion G protein-coupled receptor L4 (Adgrl4) (Rattus norvegicus (Rat)).